The primary structure comprises 426 residues: D-tagatose-1,6-bisphosphate aldolase subunit KbaZ (426 aa).

It belongs to the GatZ/KbaZ family. KbaZ subfamily. Forms a complex with KbaY.

It participates in carbohydrate metabolism; D-tagatose 6-phosphate degradation; D-glyceraldehyde 3-phosphate and glycerone phosphate from D-tagatose 6-phosphate: step 2/2. Functionally, component of the tagatose-1,6-bisphosphate aldolase KbaYZ that is required for full activity and stability of the Y subunit. Could have a chaperone-like function for the proper and stable folding of KbaY. When expressed alone, KbaZ does not show any aldolase activity. The chain is D-tagatose-1,6-bisphosphate aldolase subunit KbaZ from Escherichia coli O17:K52:H18 (strain UMN026 / ExPEC).